The primary structure comprises 417 residues: Zinc finger protein CONSTANS-LIKE 16 (417 aa).

Zn(2+)-binding residues include cysteine 17, cysteine 20, cysteine 40, and histidine 45. The B box-type; atypical zinc finger occupies cysteine 17 to leucine 59. The disordered stretch occupies residues serine 63–serine 105. A coiled-coil region spans residues leucine 212–isoleucine 239. In terms of domain architecture, CCT spans arginine 361–arginine 403.

It belongs to the CONSTANS family.

It localises to the nucleus. The polypeptide is Zinc finger protein CONSTANS-LIKE 16 (COL16) (Arabidopsis thaliana (Mouse-ear cress)).